The following is a 103-amino-acid chain: Large ribosomal subunit protein bL21 (103 aa).

Belongs to the bacterial ribosomal protein bL21 family. Part of the 50S ribosomal subunit. Contacts protein L20.

Functionally, this protein binds to 23S rRNA in the presence of protein L20. The chain is Large ribosomal subunit protein bL21 from Acinetobacter baylyi (strain ATCC 33305 / BD413 / ADP1).